We begin with the raw amino-acid sequence, 313 residues long: Undecaprenyl-diphosphatase (313 aa).

Helical transmembrane passes span 121 to 141, 152 to 172, 187 to 207, 225 to 245, 259 to 279, and 290 to 310; these read YRIG…GFLF, LWLV…AEHY, GLVM…RSGA, FSFL…LPDA, QLLV…AWLL, and FVGY…AGVI.

It belongs to the UppP family.

The protein resides in the cell membrane. It catalyses the reaction di-trans,octa-cis-undecaprenyl diphosphate + H2O = di-trans,octa-cis-undecaprenyl phosphate + phosphate + H(+). Its function is as follows. Catalyzes the dephosphorylation of undecaprenyl diphosphate (UPP). Confers resistance to bacitracin. This is Undecaprenyl-diphosphatase from Nocardia farcinica (strain IFM 10152).